A 266-amino-acid chain; its full sequence is Thiazole synthase (266 aa).

Catalysis depends on Lys106, which acts as the Schiff-base intermediate with DXP. 1-deoxy-D-xylulose 5-phosphate is bound by residues Gly167, Ala193 to Gly194, and Asn215 to Thr216.

This sequence belongs to the ThiG family. Homotetramer. Forms heterodimers with either ThiH or ThiS.

It is found in the plastid. It localises to the chloroplast. It catalyses the reaction [ThiS sulfur-carrier protein]-C-terminal-Gly-aminoethanethioate + 2-iminoacetate + 1-deoxy-D-xylulose 5-phosphate = [ThiS sulfur-carrier protein]-C-terminal Gly-Gly + 2-[(2R,5Z)-2-carboxy-4-methylthiazol-5(2H)-ylidene]ethyl phosphate + 2 H2O + H(+). It functions in the pathway cofactor biosynthesis; thiamine diphosphate biosynthesis. Functionally, catalyzes the rearrangement of 1-deoxy-D-xylulose 5-phosphate (DXP) to produce the thiazole phosphate moiety of thiamine. Sulfur is provided by the thiocarboxylate moiety of the carrier protein ThiS. In vitro, sulfur can be provided by H(2)S. In Cyanidium caldarium (Red alga), this protein is Thiazole synthase.